Consider the following 540-residue polypeptide: uncharacterized protein (540 aa).

The signal sequence occupies residues Met1–Ser20.

This sequence belongs to the TP096X family.

This is an uncharacterized protein from Treponema pallidum (strain Nichols).